We begin with the raw amino-acid sequence, 727 residues long: Catalase-peroxidase (727 aa).

Residues W95–Y218 constitute a cross-link (tryptophyl-tyrosyl-methioninium (Trp-Tyr) (with M-244)). Catalysis depends on H96, which acts as the Proton acceptor. A cross-link (tryptophyl-tyrosyl-methioninium (Tyr-Met) (with W-95)) is located at residues Y218–M244. H259 provides a ligand contact to heme b.

The protein belongs to the peroxidase family. Peroxidase/catalase subfamily. As to quaternary structure, homodimer or homotetramer. Requires heme b as cofactor. Formation of the three residue Trp-Tyr-Met cross-link is important for the catalase, but not the peroxidase activity of the enzyme.

It catalyses the reaction H2O2 + AH2 = A + 2 H2O. It carries out the reaction 2 H2O2 = O2 + 2 H2O. Its function is as follows. Bifunctional enzyme with both catalase and broad-spectrum peroxidase activity. This is Catalase-peroxidase from Persephonella marina (strain DSM 14350 / EX-H1).